Reading from the N-terminus, the 264-residue chain is Mitochondrial distribution and morphology protein 12 (264 aa).

The SMP-LTD domain maps to 1–232 (MSFDINWNKI…WPSWINLDFN (232 aa)). The interval 240–264 (ESSSSAEESLPHRDDAQDFSADARA) is disordered. Residues 248-264 (SLPHRDDAQDFSADARA) show a composition bias toward basic and acidic residues.

It belongs to the MDM12 family. As to quaternary structure, component of the ER-mitochondria encounter structure (ERMES) or MDM complex, composed of MMM1, MDM10, MDM12 and MDM34. An MMM1 homodimer associates with one molecule of MDM12 on each side in a pairwise head-to-tail manner, and the SMP-LTD domains of MMM1 and MDM12 generate a continuous hydrophobic tunnel for phospholipid trafficking.

The protein resides in the mitochondrion outer membrane. Its subcellular location is the endoplasmic reticulum membrane. In terms of biological role, component of the ERMES/MDM complex, which serves as a molecular tether to connect the endoplasmic reticulum (ER) and mitochondria. Components of this complex are involved in the control of mitochondrial shape and protein biogenesis, and function in nonvesicular lipid trafficking between the ER and mitochondria. MDM12 is required for the interaction of the ER-resident membrane protein MMM1 and the outer mitochondrial membrane-resident beta-barrel protein MDM10. The MDM12-MMM1 subcomplex functions in the major beta-barrel assembly pathway that is responsible for biogenesis of all mitochondrial outer membrane beta-barrel proteins, and acts in a late step after the SAM complex. The MDM10-MDM12-MMM1 subcomplex further acts in the TOM40-specific pathway after the action of the MDM12-MMM1 complex. Essential for establishing and maintaining the structure of mitochondria and maintenance of mtDNA nucleoids. The polypeptide is Mitochondrial distribution and morphology protein 12 (Eremothecium gossypii (strain ATCC 10895 / CBS 109.51 / FGSC 9923 / NRRL Y-1056) (Yeast)).